A 92-amino-acid polypeptide reads, in one-letter code: Small ribosomal subunit protein bS20 (92 aa).

It belongs to the bacterial ribosomal protein bS20 family.

Its function is as follows. Binds directly to 16S ribosomal RNA. The chain is Small ribosomal subunit protein bS20 from Rickettsia conorii (strain ATCC VR-613 / Malish 7).